The following is a 318-amino-acid chain: Methionyl-tRNA formyltransferase (318 aa).

A (6S)-5,6,7,8-tetrahydrofolate-binding site is contributed by 112 to 115 (SILP).

It belongs to the Fmt family.

It catalyses the reaction L-methionyl-tRNA(fMet) + (6R)-10-formyltetrahydrofolate = N-formyl-L-methionyl-tRNA(fMet) + (6S)-5,6,7,8-tetrahydrofolate + H(+). Its function is as follows. Attaches a formyl group to the free amino group of methionyl-tRNA(fMet). The formyl group appears to play a dual role in the initiator identity of N-formylmethionyl-tRNA by promoting its recognition by IF2 and preventing the misappropriation of this tRNA by the elongation apparatus. The sequence is that of Methionyl-tRNA formyltransferase from Shewanella putrefaciens (strain CN-32 / ATCC BAA-453).